A 311-amino-acid polypeptide reads, in one-letter code: tRNA-cytidine(32) 2-sulfurtransferase (311 aa).

A PP-loop motif motif is present at residues 47-52 (SGGKDS). Residues C122, C125, and C213 each coordinate [4Fe-4S] cluster.

Belongs to the TtcA family. In terms of assembly, homodimer. Requires Mg(2+) as cofactor. It depends on [4Fe-4S] cluster as a cofactor.

Its subcellular location is the cytoplasm. It catalyses the reaction cytidine(32) in tRNA + S-sulfanyl-L-cysteinyl-[cysteine desulfurase] + AH2 + ATP = 2-thiocytidine(32) in tRNA + L-cysteinyl-[cysteine desulfurase] + A + AMP + diphosphate + H(+). It participates in tRNA modification. Functionally, catalyzes the ATP-dependent 2-thiolation of cytidine in position 32 of tRNA, to form 2-thiocytidine (s(2)C32). The sulfur atoms are provided by the cysteine/cysteine desulfurase (IscS) system. This chain is tRNA-cytidine(32) 2-sulfurtransferase, found in Shigella dysenteriae serotype 1 (strain Sd197).